Here is an 88-residue protein sequence, read N- to C-terminus: Small ribosomal subunit protein bS20 (88 aa).

Residues 1–27 are disordered; it reads MANSKSAKKRALQSEKRRQHNASRRSM.

It belongs to the bacterial ribosomal protein bS20 family.

Binds directly to 16S ribosomal RNA. The protein is Small ribosomal subunit protein bS20 of Shewanella oneidensis (strain ATCC 700550 / JCM 31522 / CIP 106686 / LMG 19005 / NCIMB 14063 / MR-1).